Consider the following 292-residue polypeptide: tRNA (adenine(9)-N1)-methyltransferase (292 aa).

Residues 72-253 (TFRKGGKKVS…ISLQSKSDKI (182 aa)) enclose the SAM-dependent MTase TRM10-type domain.

Belongs to the class IV-like SAM-binding methyltransferase superfamily. TRM10 family.

The protein localises to the cytoplasm. It catalyses the reaction adenosine(9) in tRNA + S-adenosyl-L-methionine = N(1)-methyladenosine(9) in tRNA + S-adenosyl-L-homocysteine + H(+). Its function is as follows. Catalyzes the S-adenosyl-L-methionine-dependent formation of N(1)-methyladenine at position 9 (m1A9) in tRNA. This is tRNA (adenine(9)-N1)-methyltransferase from Sulfolobus acidocaldarius (strain ATCC 33909 / DSM 639 / JCM 8929 / NBRC 15157 / NCIMB 11770).